Reading from the N-terminus, the 812-residue chain is Leucine--tRNA ligase (812 aa).

A 'HIGH' region motif is present at residues 40–51 (SYPSGSNLHAGH). The 'KMSKS' region motif lies at 572-576 (KMSKS). ATP is bound at residue Lys-575.

This sequence belongs to the class-I aminoacyl-tRNA synthetase family.

The protein localises to the cytoplasm. It catalyses the reaction tRNA(Leu) + L-leucine + ATP = L-leucyl-tRNA(Leu) + AMP + diphosphate. The polypeptide is Leucine--tRNA ligase (Clostridium tetani (strain Massachusetts / E88)).